The primary structure comprises 563 residues: Methylcrotonoyl-CoA carboxylase beta chain, mitochondrial (563 aa).

Residues 1-22 (MWAVLRLALRPCARASPAGPRA) constitute a mitochondrion transit peptide. Positions 49–306 (MKALVNQLHE…QKKLDVTIEP (258 aa)) constitute a CoA carboxyltransferase N-terminal domain. Positions 49–555 (MKALVNQLHE…SAALNAPIEK (507 aa)) are carboxyltransferase. Lys-70 is subject to N6-acetyllysine; alternate. Residue Lys-70 is modified to N6-succinyllysine; alternate. Lys-141 is modified (N6-succinyllysine). Residues 309–555 (EPLFPADELY…SAALNAPIEK (247 aa)) form the CoA carboxyltransferase C-terminal domain. The tract at residues 343–372 (RFTEFKAFYGDTLVTGFARIFGYPVGIVGN) is acyl-CoA binding. Lys-495 carries the N6-acetyllysine; alternate modification. Lys-495 bears the N6-succinyllysine; alternate mark. Residue Lys-511 is modified to N6-acetyllysine.

This sequence belongs to the AccD/PCCB family. Probably a dodecamer composed of six biotin-containing alpha subunits (MCCC1) and six beta (MCCC2) subunits.

The protein localises to the mitochondrion matrix. It catalyses the reaction 3-methylbut-2-enoyl-CoA + hydrogencarbonate + ATP = 3-methyl-(2E)-glutaconyl-CoA + ADP + phosphate + H(+). It functions in the pathway amino-acid degradation; L-leucine degradation; (S)-3-hydroxy-3-methylglutaryl-CoA from 3-isovaleryl-CoA: step 2/3. In terms of biological role, carboxyltransferase subunit of the 3-methylcrotonyl-CoA carboxylase, an enzyme that catalyzes the conversion of 3-methylcrotonyl-CoA to 3-methylglutaconyl-CoA, a critical step for leucine and isovaleric acid catabolism. This Homo sapiens (Human) protein is Methylcrotonoyl-CoA carboxylase beta chain, mitochondrial (MCCC2).